Here is a 522-residue protein sequence, read N- to C-terminus: GMP synthase [glutamine-hydrolyzing] (522 aa).

The region spanning 8-204 (RLLIIDFGSQ…FVRLAGFKGD (197 aa)) is the Glutamine amidotransferase type-1 domain. The active-site Nucleophile is cysteine 86. Catalysis depends on residues histidine 179 and glutamate 181. The 193-residue stretch at 205–397 (WTMGAYREEA…LGLPASFIGR (193 aa)) folds into the GMPS ATP-PPase domain. 232–238 (SGGVDSS) lines the ATP pocket.

Homodimer.

The catalysed reaction is XMP + L-glutamine + ATP + H2O = GMP + L-glutamate + AMP + diphosphate + 2 H(+). It functions in the pathway purine metabolism; GMP biosynthesis; GMP from XMP (L-Gln route): step 1/1. Functionally, catalyzes the synthesis of GMP from XMP. The chain is GMP synthase [glutamine-hydrolyzing] from Roseobacter denitrificans (strain ATCC 33942 / OCh 114) (Erythrobacter sp. (strain OCh 114)).